Reading from the N-terminus, the 134-residue chain is Small ribosomal subunit protein uS8c (134 aa).

This sequence belongs to the universal ribosomal protein uS8 family. Part of the 30S ribosomal subunit.

The protein resides in the plastid. The protein localises to the chloroplast. One of the primary rRNA binding proteins, it binds directly to 16S rRNA central domain where it helps coordinate assembly of the platform of the 30S subunit. This chain is Small ribosomal subunit protein uS8c (rps8), found in Bigelowiella natans (Pedinomonas minutissima).